A 117-amino-acid chain; its full sequence is uncharacterized protein (117 aa).

A helical membrane pass occupies residues 57-77; the sequence is LGFPLGLLVFLHSLIVARFFV.

It is found in the membrane. This is an uncharacterized protein from Schizosaccharomyces pombe (strain 972 / ATCC 24843) (Fission yeast).